The sequence spans 334 residues: Glycerol-3-phosphate dehydrogenase [NAD(P)+] (334 aa).

Positions 13, 33, and 106 each coordinate NADPH. Residues lysine 106, glycine 137, and serine 139 each coordinate sn-glycerol 3-phosphate. An NADPH-binding site is contributed by alanine 141. Sn-glycerol 3-phosphate is bound by residues lysine 192, aspartate 245, serine 255, arginine 256, and asparagine 257. Lysine 192 functions as the Proton acceptor in the catalytic mechanism. Arginine 256 serves as a coordination point for NADPH. Residues valine 280 and glutamate 282 each contribute to the NADPH site.

This sequence belongs to the NAD-dependent glycerol-3-phosphate dehydrogenase family.

Its subcellular location is the cytoplasm. It catalyses the reaction sn-glycerol 3-phosphate + NAD(+) = dihydroxyacetone phosphate + NADH + H(+). The catalysed reaction is sn-glycerol 3-phosphate + NADP(+) = dihydroxyacetone phosphate + NADPH + H(+). It functions in the pathway membrane lipid metabolism; glycerophospholipid metabolism. Its function is as follows. Catalyzes the reduction of the glycolytic intermediate dihydroxyacetone phosphate (DHAP) to sn-glycerol 3-phosphate (G3P), the key precursor for phospholipid synthesis. In Chlamydia pneumoniae (Chlamydophila pneumoniae), this protein is Glycerol-3-phosphate dehydrogenase [NAD(P)+].